Consider the following 320-residue polypeptide: Beta-carotene 3-hydroxylase, chloroplastic (320 aa).

The transit peptide at 1–78 directs the protein to the chloroplast; sequence METQFLVSGR…EKELRGKLVV (78 aa). The next 2 helical transmembrane spans lie at 118–138 and 152–172; these read YLVA…LSVY and LSEM…MEFW. The Fatty acid hydroxylase domain maps to 165–292; sequence AAVGMEFWAR…KFNGVPYGLF (128 aa). Residues 177–182 carry the Histidine box-1 motif; the sequence is HEALWH. The Histidine box-2 signature appears at 189–193; the sequence is HESHH. 2 helical membrane-spanning segments follow: residues 204 to 224 and 228 to 248; these read DIFA…GFFH and IPGL…AYMF. The short motif at 250-255 is the Histidine box-3 element; that stretch reads HDGLVH. Positions 276–280 match the Histidine box-4 motif; it reads HTLHH.

Belongs to the sterol desaturase family.

The protein resides in the plastid. It localises to the chloroplast membrane. It catalyses the reaction all-trans-beta-carotene + 4 reduced [2Fe-2S]-[ferredoxin] + 2 O2 + 4 H(+) = all-trans-zeaxanthin + 4 oxidized [2Fe-2S]-[ferredoxin] + 2 H2O. Nonheme diiron monooxygenase involved in the biosynthesis of xanthophylls. Specific for beta-ring hydroxylations of beta-carotene. Uses ferredoxin as an electron donor. The protein is Beta-carotene 3-hydroxylase, chloroplastic (BHY) of Gentiana lutea (Yellow gentian).